Here is a 397-residue protein sequence, read N- to C-terminus: Serpin B10 (397 aa).

Positions 74 to 77 match the Nuclear localization signal motif; it reads KKRK.

The protein belongs to the serpin family. Ov-serpin subfamily. In terms of tissue distribution, expressed in many tissues, including brain, heart, kidney, liver, lung, prostate, skin, spleen and stomach.

Its subcellular location is the nucleus. The protein localises to the cytoplasm. Functionally, protease inhibitor that may play a role in the regulation of protease activities during hematopoiesis and apoptosis induced by TNF. May regulate protease activities in the cytoplasm and in the nucleus. Inhibits plasmin. This Rattus norvegicus (Rat) protein is Serpin B10 (Serpinb10).